Reading from the N-terminus, the 368-residue chain is Zinc finger protein 24 (368 aa).

Lys22 is covalently cross-linked (Glycyl lysine isopeptide (Lys-Gly) (interchain with G-Cter in SUMO2)). Residue Lys27 forms a Glycyl lysine isopeptide (Lys-Gly) (interchain with G-Cter in SUMO1); alternate linkage. Residue Lys27 forms a Glycyl lysine isopeptide (Lys-Gly) (interchain with G-Cter in SUMO2); alternate linkage. In terms of domain architecture, SCAN box spans 52-134; it reads RQRFRQFGYQ…TVLEDLESEL (83 aa). Phosphoserine occurs at positions 132 and 142. Residues Lys147, Lys177, and Lys236 each participate in a glycyl lysine isopeptide (Lys-Gly) (interchain with G-Cter in SUMO2) cross-link. The C2H2-type 1 zinc-finger motif lies at 251-273; the sequence is HICDECGKHFSQGSALILHQRIH. The interval 251 to 301 is necessary and sufficient for nuclear localization; it reads HICDECGKHFSQGSALILHQRIHSGEKPYGCVECGKAFSRSSILVQHQRVH. The residue at position 274 (Ser274) is a Phosphoserine. Glycyl lysine isopeptide (Lys-Gly) (interchain with G-Cter in SUMO2) cross-links involve residues Lys277 and Lys286. C2H2-type zinc fingers lie at residues 279-301, 307-329, and 335-357; these read YGCV…QRVH, YKCL…QRIH, and YECV…XXRH. A Phosphoserine modification is found at Ser292. A Phosphotyrosine modification is found at Tyr335. Residues Lys361 and Lys367 each participate in a glycyl lysine isopeptide (Lys-Gly) (interchain with G-Cter in SUMO2) cross-link.

It belongs to the krueppel C2H2-type zinc-finger protein family. Post-translationally, sumoylated.

Its subcellular location is the nucleus. Transcription factor required for myelination of differentiated oligodendrocytes. Required for the conversion of oligodendrocytes from the premyelinating to the myelinating state. In the developing central nervous system (CNS), involved in the maintenance in the progenitor stage by promoting the cell cycle. Specifically binds to the 5'-TCAT-3' DNA sequence. Has transcription repressor activity in vitro. The chain is Zinc finger protein 24 (ZNF24) from Pan troglodytes (Chimpanzee).